Here is a 736-residue protein sequence, read N- to C-terminus: Catalase-peroxidase (736 aa).

Positions 1 to 30 are disordered; sequence MGGNVMTDDKMNSVTSGANKQETGRDMSNR. A compositionally biased stretch (polar residues) spans 12–21; sequence NSVTSGANKQ. Residues 101-224 constitute a cross-link (tryptophyl-tyrosyl-methioninium (Trp-Tyr) (with M-250)); sequence WHSAGTYRAG…LAAVQMGLIY (124 aa). Catalysis depends on His-102, which acts as the Proton acceptor. The tryptophyl-tyrosyl-methioninium (Tyr-Met) (with W-101) cross-link spans 224 to 250; it reads YVNPEGPNGNPDPIAAAKDIREVFARM. His-265 is a heme b binding site. Residues 351 to 373 form a disordered region; that stretch reads KGGAGAGTIPDAHDPSKRHAPSM.

This sequence belongs to the peroxidase family. Peroxidase/catalase subfamily. Homodimer or homotetramer. Heme b is required as a cofactor. Formation of the three residue Trp-Tyr-Met cross-link is important for the catalase, but not the peroxidase activity of the enzyme.

The catalysed reaction is H2O2 + AH2 = A + 2 H2O. It catalyses the reaction 2 H2O2 = O2 + 2 H2O. Its function is as follows. Bifunctional enzyme with both catalase and broad-spectrum peroxidase activity. This is Catalase-peroxidase from Methanosarcina acetivorans (strain ATCC 35395 / DSM 2834 / JCM 12185 / C2A).